The following is a 443-amino-acid chain: Ribosomal protein uS12 methylthiotransferase RimO (443 aa).

One can recognise an MTTase N-terminal domain in the interval 10 to 120; the sequence is PRVGFVSLGC…VMQAVHRHLP (111 aa). 6 residues coordinate [4Fe-4S] cluster: Cys-19, Cys-55, Cys-84, Cys-151, Cys-155, and Cys-158. Residues 137–375 enclose the Radical SAM core domain; the sequence is LTPQHYAYLK…DFQEDISTQR (239 aa). The TRAM domain occupies 377-443; sequence EAKIGREMTV…IHDLYAERVV (67 aa).

This sequence belongs to the methylthiotransferase family. RimO subfamily. The cofactor is [4Fe-4S] cluster.

The protein resides in the cytoplasm. The enzyme catalyses L-aspartate(89)-[ribosomal protein uS12]-hydrogen + (sulfur carrier)-SH + AH2 + 2 S-adenosyl-L-methionine = 3-methylsulfanyl-L-aspartate(89)-[ribosomal protein uS12]-hydrogen + (sulfur carrier)-H + 5'-deoxyadenosine + L-methionine + A + S-adenosyl-L-homocysteine + 2 H(+). Its function is as follows. Catalyzes the methylthiolation of an aspartic acid residue of ribosomal protein uS12. The sequence is that of Ribosomal protein uS12 methylthiotransferase RimO from Azoarcus sp. (strain BH72).